The chain runs to 199 residues: NADH-quinone oxidoreductase subunit C (199 aa).

This sequence belongs to the complex I 30 kDa subunit family. As to quaternary structure, NDH-1 is composed of 14 different subunits. Subunits NuoB, C, D, E, F, and G constitute the peripheral sector of the complex.

The protein localises to the cell inner membrane. The enzyme catalyses a quinone + NADH + 5 H(+)(in) = a quinol + NAD(+) + 4 H(+)(out). Functionally, NDH-1 shuttles electrons from NADH, via FMN and iron-sulfur (Fe-S) centers, to quinones in the respiratory chain. The immediate electron acceptor for the enzyme in this species is believed to be ubiquinone. Couples the redox reaction to proton translocation (for every two electrons transferred, four hydrogen ions are translocated across the cytoplasmic membrane), and thus conserves the redox energy in a proton gradient. The chain is NADH-quinone oxidoreductase subunit C from Cupriavidus metallidurans (strain ATCC 43123 / DSM 2839 / NBRC 102507 / CH34) (Ralstonia metallidurans).